The sequence spans 354 residues: Rhodopsin (354 aa).

Residues 1–36 (MNGTEGPAFYVPMSNATGVVRSPYEYPQYYLVAPWA) are Extracellular-facing. Residues N2 and N15 are each glycosylated (N-linked (GlcNAc...) asparagine). A helical membrane pass occupies residues 37–61 (YGLLAAYMFFLIITGFPVNFLTLYV). Residues 62–73 (TIEHKKLRTPLN) lie on the Cytoplasmic side of the membrane. The chain crosses the membrane as a helical span at residues 74 to 96 (YILLNLAIADLFMVFGGFTTTMY). The Extracellular portion of the chain corresponds to 97-110 (TSLHGYFVFGRLGC). A disulfide bond links C110 and C187. The chain crosses the membrane as a helical span at residues 111–133 (NLEGFFATLGGEMGLWSLVVLAI). The 'Ionic lock' involved in activated form stabilization signature appears at 134–136 (ERW). Residues 134–152 (ERWMVVCKPVSNFRFGENH) are Cytoplasmic-facing. A helical transmembrane segment spans residues 153–173 (AIMGVAFTWVMACSCAVPPLV). Residues 174–202 (GWSRYIPEGMQCSCGVDYYTRTPGVNNES) lie on the Extracellular side of the membrane. Residue N200 is glycosylated (N-linked (GlcNAc...) asparagine). The chain crosses the membrane as a helical span at residues 203-224 (FVIYMFIVHFFIPLIVIFFCYG). The Cytoplasmic segment spans residues 225 to 252 (RLVCTVKEAAAQQQESETTQRAEREVTR). Residues 253-274 (MVIIMVIAFLICWLPYAGVAWY) traverse the membrane as a helical segment. Over 275-286 (IFTHQGSEFGPV) the chain is Extracellular. Residues 287 to 308 (FMTLPAFFAKTSAVYNPCIYIC) form a helical membrane-spanning segment. Residue K296 is modified to N6-(retinylidene)lysine. The Cytoplasmic segment spans residues 309 to 354 (MNKQFRHCMITTLCCGKNPFEEEEGASTTASKTEASSVSSSSVSPA). Positions 333–354 (GASTTASKTEASSVSSSSVSPA) are disordered. A compositionally biased stretch (low complexity) spans 334–354 (ASTTASKTEASSVSSSSVSPA).

This sequence belongs to the G-protein coupled receptor 1 family. Opsin subfamily. In terms of processing, phosphorylated on some or all of the serine and threonine residues present in the C-terminal region. Post-translationally, contains one covalently linked retinal chromophore. Retinal rod photoreceptor cells, predominantly in the outer segments (at protein level). Retinal rod photoreceptor cells.

Its subcellular location is the membrane. The protein resides in the cell projection. It is found in the cilium. The protein localises to the photoreceptor outer segment. In terms of biological role, photoreceptor required for image-forming vision at low light intensity. While most salt water fish species use retinal as chromophore, most freshwater fish use 3-dehydroretinal, or a mixture of retinal and 3-dehydroretinal. Light-induced isomerization of 11-cis to all-trans retinal triggers a conformational change that activates signaling via G-proteins. Subsequent receptor phosphorylation mediates displacement of the bound G-protein alpha subunit by arrestin and terminates signaling. The sequence is that of Rhodopsin (rho) from Danio rerio (Zebrafish).